We begin with the raw amino-acid sequence, 518 residues long: Cell wall biosynthesis protein LcpA (518 aa).

At Met-1 to Ser-31 the chain is on the cytoplasmic side. The helical transmembrane segment at Val-32 to Gly-52 threads the bilayer. Residues Lys-53–Asn-518 lie on the Periplasmic side of the membrane. The segment at Ala-485–Asn-518 is disordered.

It belongs to the LytR/CpsA/Psr (LCP) family. Forms homodimers and homotetramers.

It localises to the cell inner membrane. Functionally, involved in cell wall biosynthesis. May be responsible for the transfer of arabinogalactan onto peptidoglycan. In vitro, has pyrophosphatase activity. This chain is Cell wall biosynthesis protein LcpA, found in Corynebacterium glutamicum (strain ATCC 13032 / DSM 20300 / JCM 1318 / BCRC 11384 / CCUG 27702 / LMG 3730 / NBRC 12168 / NCIMB 10025 / NRRL B-2784 / 534).